Consider the following 452-residue polypeptide: MKVLILAAGLGKRMKSKYPKVVHKILGKPMINWVVDLGKAFGEVGVVVGHKADIVKSYLPEDVKTYLQEPQLGTGHAVMCARDFISENEDLLVLYGDVPLLSKETINKLKKEHEEQKNQVTVLTFVTDNPAGYGRIIRENGKVRIVEDKDATEEEKKIKEVNSGIYIFSGKFVLENLDKLSNNNAQGEYYLTDLVGMAERSSTVILEDIVEVSGVNDRIQLAQLETIAKQRILEKLMLSGVTIVDPNSTFIGPDVEIGMDTIIYPFTIIEGYTKIGEDCEVGPYSHIVDSNIGNEVKVIRSEVEKSVIENKVSVGPFSRLREGTVLKEKVKIGNFVETKKTTVGKNSKAQHLTYLGDATIGEDVNVGAGTITCNYDGYKKYPTYIGDGAFIGSNSSLVAPVNIGKGAITGAGSVITEDVPNDALALGRARQIIKEGWAKKKREELKNADHKE.

The tract at residues 1–218 (MKVLILAAGL…IVEVSGVNDR (218 aa)) is pyrophosphorylase. UDP-N-acetyl-alpha-D-glucosamine is bound by residues 6–9 (LAAG), lysine 20, glutamine 68, 73–74 (GT), 95–97 (YGD), glycine 134, glutamate 147, asparagine 162, and asparagine 216. Aspartate 97 contributes to the Mg(2+) binding site. Asparagine 216 provides a ligand contact to Mg(2+). The linker stretch occupies residues 219–239 (IQLAQLETIAKQRILEKLMLS). Positions 240 to 452 (GVTIVDPNST…EELKNADHKE (213 aa)) are N-acetyltransferase. UDP-N-acetyl-alpha-D-glucosamine-binding residues include arginine 321 and lysine 339. Histidine 351 (proton acceptor) is an active-site residue. The UDP-N-acetyl-alpha-D-glucosamine site is built by tyrosine 354 and asparagine 365. Residues alanine 368, 374–375 (NY), serine 393, alanine 411, and arginine 428 each bind acetyl-CoA.

It in the N-terminal section; belongs to the N-acetylglucosamine-1-phosphate uridyltransferase family. In the C-terminal section; belongs to the transferase hexapeptide repeat family. In terms of assembly, homotrimer. Mg(2+) serves as cofactor.

The protein resides in the cytoplasm. It carries out the reaction alpha-D-glucosamine 1-phosphate + acetyl-CoA = N-acetyl-alpha-D-glucosamine 1-phosphate + CoA + H(+). It catalyses the reaction N-acetyl-alpha-D-glucosamine 1-phosphate + UTP + H(+) = UDP-N-acetyl-alpha-D-glucosamine + diphosphate. The protein operates within nucleotide-sugar biosynthesis; UDP-N-acetyl-alpha-D-glucosamine biosynthesis; N-acetyl-alpha-D-glucosamine 1-phosphate from alpha-D-glucosamine 6-phosphate (route II): step 2/2. It participates in nucleotide-sugar biosynthesis; UDP-N-acetyl-alpha-D-glucosamine biosynthesis; UDP-N-acetyl-alpha-D-glucosamine from N-acetyl-alpha-D-glucosamine 1-phosphate: step 1/1. Its pathway is bacterial outer membrane biogenesis; LPS lipid A biosynthesis. Catalyzes the last two sequential reactions in the de novo biosynthetic pathway for UDP-N-acetylglucosamine (UDP-GlcNAc). The C-terminal domain catalyzes the transfer of acetyl group from acetyl coenzyme A to glucosamine-1-phosphate (GlcN-1-P) to produce N-acetylglucosamine-1-phosphate (GlcNAc-1-P), which is converted into UDP-GlcNAc by the transfer of uridine 5-monophosphate (from uridine 5-triphosphate), a reaction catalyzed by the N-terminal domain. In Fervidobacterium nodosum (strain ATCC 35602 / DSM 5306 / Rt17-B1), this protein is Bifunctional protein GlmU.